The primary structure comprises 773 residues: Glucan endo-1,3-beta-D-glucosidase (773 aa).

Positions 1–194 (MPPGAKVPQA…KNYFSIAVLP (194 aa)) are beta-sandwich subdomain. The 647-residue stretch at 1-647 (MPPGAKVPQA…HWICNLDSLG (647 aa)) folds into the GH81 domain. Mg(2+) contacts are provided by isoleucine 31, asparagine 34, glutamine 35, tyrosine 36, and alanine 89. The interval 195–288 (DNTVSTLTYY…QGTSFKTVYR (94 aa)) is alpha/beta subdomain. Residues 298–647 (DKGTYDREAL…HWICNLDSLG (350 aa)) are (alpha/beta)6 barrel subdomain. The (1,3-beta-D-glucosyl)n site is built by tyrosine 327 and lysine 331. Residues aspartate 365, threonine 368, glutamate 373, and lysine 376 each coordinate Ca(2+). Aspartate 402 and histidine 406 together coordinate (1,3-beta-D-glucosyl)n. Aspartate 402 is a catalytic residue. Ca(2+)-binding residues include leucine 454, arginine 455, and phenylalanine 457. Positions 477, 479, and 483 each coordinate (1,3-beta-D-glucosyl)n. Catalysis depends on residues glutamate 479 and glutamate 483. 4 residues coordinate Mg(2+): lysine 527, lysine 618, asparagine 619, and tryptophan 621. Residues aspartate 712, asparagine 714, aspartate 716, glycine 717, lysine 718, aspartate 723, aspartate 748, isoleucine 749, asparagine 750, aspartate 752, lysine 754, and aspartate 759 each coordinate Ca(2+).

Belongs to the glycosyl hydrolase 81 family. It depends on Ca(2+) as a cofactor. Mg(2+) serves as cofactor.

It localises to the secreted. It carries out the reaction Hydrolysis of (1-&gt;3)-beta-D-glucosidic linkages in (1-&gt;3)-beta-D-glucans.. Inhibited by manganese, zinc, and copper ions. In terms of biological role, cleaves internal linkages in 1,3-beta-glucan. May contribute to plant biomass degradation. The polypeptide is Glucan endo-1,3-beta-D-glucosidase (Acetivibrio thermocellus (strain ATCC 27405 / DSM 1237 / JCM 9322 / NBRC 103400 / NCIMB 10682 / NRRL B-4536 / VPI 7372) (Clostridium thermocellum)).